The chain runs to 426 residues: Pregnancy-specific beta-1-glycoprotein 9 (426 aa).

Positions 1-34 (MGPLPAPSCTQRITWKGLLLTASLLNFWNPPTTA) are cleaved as a signal peptide. An Ig-like V-type domain is found at 35–144 (EVTIEAQPPK…IRHFTFTLYL (110 aa)). N-linked (GlcNAc...) asparagine glycans are attached at residues N104 and N111. The Cell attachment site signature appears at 127–129 (RGD). Ig-like C2-type domains lie at 147 to 234 (PKPY…VTLN), 242 to 326 (PYIT…PVIL), and 335 to 410 (PRIY…KSMT). 3 disulfide bridges follow: C169–C217, C262–C310, and C354–C394. Residues N199, N268, N303, and N387 are each glycosylated (N-linked (GlcNAc...) asparagine).

Belongs to the immunoglobulin superfamily. CEA family. As to quaternary structure, interacts with latency-associated peptide; leading to TGFB1 activation.

The protein resides in the secreted. Functionally, binds to the small latent transforming growth factor-beta complex, consisting of the N-terminal TGFB1 latency-associated peptide (LAP) and the mature form of TGFB1, thereby leading to the activation of TGFB1. The activation of TGFB1 leads to stimulation of naive CD4(+) T-cells to increase FoxP3 expression and to an increase in the number of FoxP3(+) regulatory T-cells. Induces the differentiation of a suppressive CD4(+)LAP(+)FoxP3(-) T-cell subset. Induces the secretion of TGFB1 in macrophages, but not in activated CD4(+) T-cells. May reduce the expression of several pro-inflammatory cytokines and chemokines by CD4(+) T-cells, including IL2 and IL6. This Homo sapiens (Human) protein is Pregnancy-specific beta-1-glycoprotein 9 (PSG9).